The primary structure comprises 212 residues: Peptide methionine sulfoxide reductase MsrA (212 aa).

C52 is an active-site residue.

It belongs to the MsrA Met sulfoxide reductase family.

The catalysed reaction is L-methionyl-[protein] + [thioredoxin]-disulfide + H2O = L-methionyl-(S)-S-oxide-[protein] + [thioredoxin]-dithiol. It carries out the reaction [thioredoxin]-disulfide + L-methionine + H2O = L-methionine (S)-S-oxide + [thioredoxin]-dithiol. Functionally, has an important function as a repair enzyme for proteins that have been inactivated by oxidation. Catalyzes the reversible oxidation-reduction of methionine sulfoxide in proteins to methionine. This chain is Peptide methionine sulfoxide reductase MsrA, found in Yersinia enterocolitica serotype O:8 / biotype 1B (strain NCTC 13174 / 8081).